The sequence spans 279 residues: Prephenate dehydratase (279 aa).

The region spanning 2–178 (KIAYLGPRGS…NSTRFWLLGK (177 aa)) is the Prephenate dehydratase domain. One can recognise an ACT domain in the interval 194–270 (LALTLPDNLP…LGVKVRLLGN (77 aa)).

It catalyses the reaction prephenate + H(+) = 3-phenylpyruvate + CO2 + H2O. The protein operates within amino-acid biosynthesis; L-phenylalanine biosynthesis; phenylpyruvate from prephenate: step 1/1. This Lactococcus lactis subsp. lactis (strain IL1403) (Streptococcus lactis) protein is Prephenate dehydratase (pheA).